The sequence spans 105 residues: Large ribosomal subunit protein uL24 (105 aa).

Belongs to the universal ribosomal protein uL24 family. As to quaternary structure, part of the 50S ribosomal subunit.

Its function is as follows. One of two assembly initiator proteins, it binds directly to the 5'-end of the 23S rRNA, where it nucleates assembly of the 50S subunit. One of the proteins that surrounds the polypeptide exit tunnel on the outside of the subunit. The polypeptide is Large ribosomal subunit protein uL24 (Mycobacterium leprae (strain Br4923)).